The sequence spans 440 residues: MKRQLNLRFNRKDIRWYLLRLFSNLQFSIILLLLIAIFSTIGTVIEQNKESSFYQTQYTLSNEYYNILNWKNIELFGFNHVYTTWWFLSLLFIFSLSLFTCSISRQIPSLQNARRWHFYKNPNQFKKFTGSQEIKTTQLNLLASCLQNYNYHIFQQGKSIYGYKGLLGRLAPIFVHGSIILLLTGSVLGLVSGFSAQEMVPSGELFRLQNIISSGKFSYIPQEFSARVNDFNIEYNPNKSISQFFSDISILNSEGKELKRSTIYVNKPLEFHGLTIYQTDWDIIAIRVRINNGNILQIPLKSVLLPNNNKIWIGVLFQEKESQLSVVLSDLQGQATIYNKNGKNILSINIGEKYIINNSTITFLNTIASTGLQIKNDPGIPIVYASFFFLITSISVSYISYSQIWIVEKNRHFYIGGVTNRAQLMFEEELLKISKMSSSI.

3 helical membrane passes run 25 to 45, 84 to 104, and 170 to 190; these read LQFS…GTVI, TWWF…CSIS, and LAPI…VLGL.

It belongs to the Ccs1/CcsB family. In terms of assembly, may interact with CcsA.

The protein localises to the plastid. The protein resides in the chloroplast thylakoid membrane. Its function is as follows. Required during biogenesis of c-type cytochromes (cytochrome c6 and cytochrome f) at the step of heme attachment. The protein is Cytochrome c biogenesis protein Ccs1 of Pyropia yezoensis (Susabi-nori).